We begin with the raw amino-acid sequence, 447 residues long: Naphthalene 1,2-dioxygenase system, large oxygenase component (447 aa).

Residues 37-135 (WLFLTHDSLI…IKKKCLGLKE (99 aa)) enclose the Rieske domain. [2Fe-2S] cluster-binding residues include Cys79, His81, Cys99, and His102. Fe cation is bound by residues His206, His211, and Asp360.

It belongs to the bacterial ring-hydroxylating dioxygenase alpha subunit family. As to quaternary structure, the naphthalene dioxygenase (NDO) multicomponent enzyme system is composed of an electron transfer component and a dioxygenase component (iron sulfur protein (ISP)). The electron transfer component is composed of a ferredoxin reductase (NagAa) and a ferredoxin (NagAb), and the dioxygenase component is formed by a large alpha subunit (NagAc) and a small beta subunit (NagAd). [2Fe-2S] cluster is required as a cofactor. Requires Fe(2+) as cofactor.

The enzyme catalyses naphthalene + NADH + O2 + H(+) = (1R,2S)-1,2-dihydronaphthalene-1,2-diol + NAD(+). It participates in aromatic compound metabolism; naphthalene degradation. In terms of biological role, component of the naphthalene dioxygenase (NDO) multicomponent enzyme system which catalyzes the incorporation of both atoms of molecular oxygen into naphthalene to form cis-(1R,2S)-dihydroxy-1,2-dihydronaphthalene. The alpha subunit has a catalytic role in the holoenzyme. Also able to use styrene as substrate. The polypeptide is Naphthalene 1,2-dioxygenase system, large oxygenase component (Ralstonia sp).